Here is a 79-residue protein sequence, read N- to C-terminus: Conotoxin ArMSGL-0121 (79 aa).

An N-terminal signal peptide occupies residues 1-20; sequence MSRLGIMVLTLLLLVFIVTS. A propeptide spanning residues 21-44 is cleaved from the precursor; that stretch reads HQDAGEKQATQRNAINFRWRRSFT. Cystine bridges form between cysteine 52–cysteine 64, cysteine 56–cysteine 73, and cysteine 63–cysteine 77. Leucine 78 carries the leucine amide modification.

Belongs to the conotoxin O3 superfamily. In terms of tissue distribution, expressed by the venom duct.

It localises to the secreted. The chain is Conotoxin ArMSGL-0121 from Conus arenatus (Sand-dusted cone).